Reading from the N-terminus, the 264-residue chain is Putative [LysW]-aminoadipate/[LysW]-glutamate kinase (264 aa).

Substrate-binding positions include 34–35, Arg61, and Asn169; that span reads GG.

This sequence belongs to the acetylglutamate kinase family. LysZ subfamily.

The protein localises to the cytoplasm. It catalyses the reaction [amino-group carrier protein]-C-terminal-N-(1,4-dicarboxybutan-1-yl)-L-glutamine + ATP = [amino-group carrier protein]-C-terminal-N-(1-carboxy-5-phosphooxy-5-oxopentan-1-yl)-L-glutamine + ADP. The enzyme catalyses [amino-group carrier protein]-C-terminal-gamma-(L-glutamyl)-L-glutamate + ATP = [amino-group carrier protein]-C-terminal-gamma-(5-phospho-L-glutamyl)-L-glutamate + ADP. The protein operates within amino-acid biosynthesis; L-lysine biosynthesis via AAA pathway; L-lysine from L-alpha-aminoadipate (Thermus route): step 2/5. Its pathway is amino-acid biosynthesis; L-arginine biosynthesis. In terms of biological role, involved in both the arginine and lysine biosynthetic pathways. Phosphorylates the LysW-bound precursors glutamate (for arginine biosynthesis), respectively alpha-aminoadipate (for lysine biosynthesis). This chain is Putative [LysW]-aminoadipate/[LysW]-glutamate kinase, found in Ignicoccus hospitalis (strain KIN4/I / DSM 18386 / JCM 14125).